Reading from the N-terminus, the 250-residue chain is Precorrin-4 C(11)-methyltransferase (250 aa).

This sequence belongs to the precorrin methyltransferase family.

The catalysed reaction is precorrin-4 + S-adenosyl-L-methionine = precorrin-5 + S-adenosyl-L-homocysteine. Its pathway is cofactor biosynthesis; adenosylcobalamin biosynthesis; cob(II)yrinate a,c-diamide from precorrin-2 (aerobic route): step 4/10. Its function is as follows. Catalyzes the methylation of C-11 in precorrin-4 to form precorrin-5. The polypeptide is Precorrin-4 C(11)-methyltransferase (cobM) (Pseudomonas aeruginosa (strain ATCC 15692 / DSM 22644 / CIP 104116 / JCM 14847 / LMG 12228 / 1C / PRS 101 / PAO1)).